The chain runs to 734 residues: Rho GTPase-activating protein gacL (734 aa).

The Rho-GAP domain occupies 141 to 339 (ISLDTLIAKE…QMILHYDTLF (199 aa)). WD repeat units lie at residues 381–430 (GHNK…FIKE), 539–579 (LFMK…TIHQ), and 585–623 (KRPK…LEHK).

The protein resides in the cytoplasm. In terms of biological role, rho GTPase-activating protein involved in the signal transduction pathway. This chain is Rho GTPase-activating protein gacL (gacL), found in Dictyostelium discoideum (Social amoeba).